The following is a 247-amino-acid chain: tRNA (guanine-N(7)-)-methyltransferase (247 aa).

S-adenosyl-L-methionine contacts are provided by residues Gly-70, 93-94 (EI), 128-129 (NA), and Leu-148. The active site involves Asp-151. 226-228 (SEE) is an S-adenosyl-L-methionine binding site.

It belongs to the class I-like SAM-binding methyltransferase superfamily. TrmB family.

It is found in the nucleus. The catalysed reaction is guanosine(46) in tRNA + S-adenosyl-L-methionine = N(7)-methylguanosine(46) in tRNA + S-adenosyl-L-homocysteine. It functions in the pathway tRNA modification; N(7)-methylguanine-tRNA biosynthesis. In terms of biological role, catalyzes the formation of N(7)-methylguanine at position 46 (m7G46) in tRNA. This chain is tRNA (guanine-N(7)-)-methyltransferase, found in Drosophila pseudoobscura pseudoobscura (Fruit fly).